We begin with the raw amino-acid sequence, 156 residues long: MRRRKALVREVLPDPIYGNKVITKFINSLMYDGKKSIATKIMYGAINLIDQKGGEKKGIEVFNDAIENVKPVLEVKSRRVGGATYQVPIEVRPARQQALAIRWIIAFARKRSERTMIEKLAYELLDAANSKGSSFKKKEDTYKMAEANKAFAHYRW.

The protein belongs to the universal ribosomal protein uS7 family. Part of the 30S ribosomal subunit. Contacts proteins S9 and S11.

Functionally, one of the primary rRNA binding proteins, it binds directly to 16S rRNA where it nucleates assembly of the head domain of the 30S subunit. Is located at the subunit interface close to the decoding center, probably blocks exit of the E-site tRNA. The protein is Small ribosomal subunit protein uS7 of Campylobacter hominis (strain ATCC BAA-381 / DSM 21671 / CCUG 45161 / LMG 19568 / NCTC 13146 / CH001A).